Reading from the N-terminus, the 158-residue chain is Interleukin-36 alpha (158 aa).

The propeptide occupies 1 to 5 (MEKAL). Y96 carries the 3'-nitrotyrosine modification.

The protein belongs to the IL-1 family. In terms of assembly, interacts with TMED10; the interaction mediates the translocation from the cytoplasm into the ERGIC (endoplasmic reticulum-Golgi intermediate compartment) and thereby secretion. Post-translationally, N-terminal truncation leads to a dramatic enhancement of its activity (&gt;1000-fold). Expressed in immune system and fetal brain, but not in other tissues tested or in multiple hematopoietic cell lines. Predominantly expressed in skin keratinocytes but not in fibroblasts, endothelial cells or melanocytes. Increased in lesional psoriasis skin.

It localises to the cytoplasm. Its subcellular location is the secreted. Cytokine that binds to and signals through the IL1RL2/IL-36R receptor which in turn activates NF-kappa-B and MAPK signaling pathways in target cells linked to a pro-inflammatory response. Part of the IL-36 signaling system that is thought to be present in epithelial barriers and to take part in local inflammatory response; similar to the IL-1 system with which it shares the coreceptor IL1RAP. Seems to be involved in skin inflammatory response by acting on keratinocytes, dendritic cells and indirectly on T-cells to drive tissue infiltration, cell maturation and cell proliferation. In cultured keratinocytes induces the expression of macrophage, T-cell, and neutrophil chemokines, such as CCL3, CCL4, CCL5, CCL2, CCL17, CCL22, CL20, CCL5, CCL2, CCL17, CCL22, CXCL8, CCL20 and CXCL1, and the production of pro-inflammatory cytokines such as TNF-alpha, IL-8 and IL-6. In cultured monocytes up-regulates expression of IL-1A, IL-1B and IL-6. In myeloid dendritic cells involved in cell maturation by up-regulating surface expression of CD83, CD86 and HLA-DR. In monocyte-derived dendritic cells facilitates dendritic cell maturation and drives T-cell proliferation. May play a role in pro-inflammatory effects in the lung. This is Interleukin-36 alpha from Homo sapiens (Human).